The primary structure comprises 81 residues: Photosystem I iron-sulfur center (81 aa).

4Fe-4S ferredoxin-type domains lie at S2–W31 and G37–Y68. C11, C14, C17, C21, C48, C51, C54, and C58 together coordinate [4Fe-4S] cluster.

As to quaternary structure, the cyanobacterial PSI reaction center is composed of one copy each of PsaA,B,C,D,E,F,I,J,K,L,M and X, and forms trimeric complexes. It depends on [4Fe-4S] cluster as a cofactor.

The protein resides in the cellular thylakoid membrane. The catalysed reaction is reduced [plastocyanin] + hnu + oxidized [2Fe-2S]-[ferredoxin] = oxidized [plastocyanin] + reduced [2Fe-2S]-[ferredoxin]. Its function is as follows. Apoprotein for the two 4Fe-4S centers FA and FB of photosystem I (PSI); essential for photochemical activity. FB is the terminal electron acceptor of PSI, donating electrons to ferredoxin. The C-terminus interacts with PsaA/B/D and helps assemble the protein into the PSI complex. Required for binding of PsaD and PsaE to PSI. PSI is a plastocyanin/cytochrome c6-ferredoxin oxidoreductase, converting photonic excitation into a charge separation, which transfers an electron from the donor P700 chlorophyll pair to the spectroscopically characterized acceptors A0, A1, FX, FA and FB in turn. This Prochlorococcus marinus (strain SARG / CCMP1375 / SS120) protein is Photosystem I iron-sulfur center.